We begin with the raw amino-acid sequence, 492 residues long: Probable cytosol aminopeptidase (492 aa).

Mn(2+)-binding residues include K262 and D267. K274 is an active-site residue. Mn(2+) contacts are provided by D286, D345, and E347. R349 is an active-site residue.

It belongs to the peptidase M17 family. Mn(2+) serves as cofactor.

Its subcellular location is the cytoplasm. The enzyme catalyses Release of an N-terminal amino acid, Xaa-|-Yaa-, in which Xaa is preferably Leu, but may be other amino acids including Pro although not Arg or Lys, and Yaa may be Pro. Amino acid amides and methyl esters are also readily hydrolyzed, but rates on arylamides are exceedingly low.. The catalysed reaction is Release of an N-terminal amino acid, preferentially leucine, but not glutamic or aspartic acids.. Functionally, presumably involved in the processing and regular turnover of intracellular proteins. Catalyzes the removal of unsubstituted N-terminal amino acids from various peptides. This chain is Probable cytosol aminopeptidase, found in Acaryochloris marina (strain MBIC 11017).